A 103-amino-acid polypeptide reads, in one-letter code: Small ribosomal subunit protein uS10 (103 aa).

It belongs to the universal ribosomal protein uS10 family. As to quaternary structure, part of the 30S ribosomal subunit.

Its function is as follows. Involved in the binding of tRNA to the ribosomes. This is Small ribosomal subunit protein uS10 from Marinomonas sp. (strain MWYL1).